The chain runs to 295 residues: Aquaporin-9 (295 aa).

Topologically, residues 1 to 24 (MQPEGAEKGKSFKQRLVLKSSLAK) are cytoplasmic. Residues 25-43 (ETLSEFLGTFILIVLGCGC) traverse the membrane as a helical segment. The Extracellular portion of the chain corresponds to 44–57 (VAQAILSRGRFGGV). A helical transmembrane segment spans residues 58 to 77 (ITINVGFSMAVAMAIYVAGG). At 78–79 (VS) the chain is on the cytoplasmic side. The discontinuously helical intramembrane region spans 80–92 (GGHINPAVSLAMC). An NPA 1 motif is present at residues 84–86 (NPA). Topologically, residues 93-98 (LFGRMK) are cytoplasmic. Residues 99-123 (WFKLPFYVGAQFLGAFVGAATVFGI) form a helical membrane-spanning segment. The Extracellular segment spans residues 124–160 (YYDGLMSFAGGKLLIVGENATAHIFATYPAPYLSLAN). The helical transmembrane segment at 161 to 178 (AFADQVVATMILLIIVFA) threads the bilayer. Residues 179 to 190 (IFDSRNLGAPRG) lie on the Cytoplasmic side of the membrane. The chain crosses the membrane as a helical span at residues 191–207 (LEPIAIGLLIIVIASSL). The Extracellular portion of the chain corresponds to 208-210 (GLN). Positions 211–225 (SGCAMNPARDLSPRL) form an intramembrane region, discontinuously helical. Residues 216 to 218 (NPA) carry the NPA 2 motif. At 226–243 (FTALAGWGFEVFRAGNNF) the chain is on the extracellular side. The helical transmembrane segment at 244–264 (WWIPVVGPLVGAVIGGLIYVL) threads the bilayer. Residues 265–295 (VIEIHHPEPDSVFKTEQSEDKPEKYELSVIM) lie on the Cytoplasmic side of the membrane.

It belongs to the MIP/aquaporin (TC 1.A.8) family. As to quaternary structure, homotetramer; each monomer provides an independent glycerol/water pore. In terms of tissue distribution, highly expressed in peripheral leukocytes. Also expressed in liver, lung, and spleen.

The protein resides in the cell membrane. Its subcellular location is the basolateral cell membrane. It catalyses the reaction glycerol(in) = glycerol(out). It carries out the reaction H2O(in) = H2O(out). The catalysed reaction is urea(in) = urea(out). The enzyme catalyses (S)-lactate(in) = (S)-lactate(out). It catalyses the reaction NH4(+)(in) = NH4(+)(out). It carries out the reaction uracil(in) = uracil(out). The catalysed reaction is adenine(out) = adenine(in). The enzyme catalyses 3-hydroxybutanoate(in) = 3-hydroxybutanoate(out). It catalyses the reaction D-sorbitol(in) = D-sorbitol(out). It carries out the reaction D-mannitol(in) = D-mannitol(out). The catalysed reaction is H2O2(out) = H2O2(in). The enzyme catalyses arsenite(in) = arsenite(out). It catalyses the reaction selenite(in) = selenite(out). Aquaglyceroporins form homotetrameric transmembrane channels, with each monomer independently mediating glycerol and water transport across the plasma membrane along their osmotic gradient. AQP9 is the primary route for glycerol uptake in hepatocytes, supporting hepatic gluconeogenesis. It exhibits broad specificity and may transport various small, non-charged solutes, including carbamides, polyols, purines, and pyrimidines. AQP9 may also facilitate hepatic urea extrusion. Due to its permeability to lactate, AQP9 might participate in the astrocyte-to-neuron lactate shuttle, supplying neurons with energy. Additionally, AQP9 is permeable to arsenite, contributing to arsenic excretion by the liver and providing partial protection against arsenic toxicity. It is also permeable to H2O2 in vivo. Could also be permeable to ammonium. This chain is Aquaporin-9, found in Homo sapiens (Human).